The following is a 461-amino-acid chain: Asparagine--tRNA ligase (461 aa).

Belongs to the class-II aminoacyl-tRNA synthetase family. Homodimer.

It is found in the cytoplasm. The enzyme catalyses tRNA(Asn) + L-asparagine + ATP = L-asparaginyl-tRNA(Asn) + AMP + diphosphate + H(+). The chain is Asparagine--tRNA ligase from Nitratidesulfovibrio vulgaris (strain ATCC 29579 / DSM 644 / CCUG 34227 / NCIMB 8303 / VKM B-1760 / Hildenborough) (Desulfovibrio vulgaris).